We begin with the raw amino-acid sequence, 252 residues long: Triosephosphate isomerase (252 aa).

9-11 is a substrate binding site; the sequence is NWK. His98 serves as the catalytic Electrophile. The active-site Proton acceptor is the Glu170. Substrate is bound by residues Gly176 and Ser215.

The protein belongs to the triosephosphate isomerase family. In terms of assembly, homodimer.

It is found in the cytoplasm. It carries out the reaction D-glyceraldehyde 3-phosphate = dihydroxyacetone phosphate. It participates in carbohydrate biosynthesis; gluconeogenesis. Its pathway is carbohydrate degradation; glycolysis; D-glyceraldehyde 3-phosphate from glycerone phosphate: step 1/1. Functionally, involved in the gluconeogenesis. Catalyzes stereospecifically the conversion of dihydroxyacetone phosphate (DHAP) to D-glyceraldehyde-3-phosphate (G3P). This chain is Triosephosphate isomerase, found in Buchnera aphidicola subsp. Baizongia pistaciae (strain Bp).